The sequence spans 156 residues: Transcription elongation factor GreA (156 aa).

A coiled-coil region spans residues 6 to 75; sequence IYLTKEGYEK…ELENMLSKAE (70 aa).

The protein belongs to the GreA/GreB family.

Functionally, necessary for efficient RNA polymerase transcription elongation past template-encoded arresting sites. The arresting sites in DNA have the property of trapping a certain fraction of elongating RNA polymerases that pass through, resulting in locked ternary complexes. Cleavage of the nascent transcript by cleavage factors such as GreA or GreB allows the resumption of elongation from the new 3'terminus. GreA releases sequences of 2 to 3 nucleotides. This chain is Transcription elongation factor GreA, found in Thermosipho africanus (strain TCF52B).